The following is an 85-amino-acid chain: Probable Thioredoxin (85 aa).

The Glutaredoxin domain occupies 2–85 (VVKIEVFTSP…LFEAISDEIE (84 aa)). An intrachain disulfide couples C13 to C16.

Belongs to the glutaredoxin family.

It localises to the cytoplasm. Its function is as follows. Does not function as a glutathione-disulfide oxidoreductase in the presence of glutathione and glutathione reductase. May be a component of a ribonucleotide-reducing system distinct from the previously described systems utilizing thioredoxin or glutaredoxin. The chain is Probable Thioredoxin from Methanothermobacter marburgensis (strain ATCC BAA-927 / DSM 2133 / JCM 14651 / NBRC 100331 / OCM 82 / Marburg) (Methanobacterium thermoautotrophicum).